The following is a 444-amino-acid chain: Tubulin gamma chain (444 aa).

A GTP-binding site is contributed by 144-150; that stretch reads SGGTGSG.

It belongs to the tubulin family.

It is found in the cytoplasm. Its subcellular location is the cytoskeleton. It localises to the microtubule organizing center. The protein localises to the centrosome. The protein resides in the cell junction. It is found in the hemidesmosome. Its subcellular location is the adherens junction. Its function is as follows. Tubulin is the major constituent of microtubules. The gamma chain is found at microtubule organizing centers (MTOC) such as the spindle poles or the centrosome, suggesting that it is involved in the minus-end nucleation of microtubule assembly. The chain is Tubulin gamma chain (tbg-1) from Caenorhabditis elegans.